Here is a 396-residue protein sequence, read N- to C-terminus: Elongation factor Tu (396 aa).

Residues 10 to 206 (KEHVNIGTIG…AVDTWIETPV (197 aa)) enclose the tr-type G domain. Positions 19 to 26 (GHVDHGKT) are G1. A GTP-binding site is contributed by 19 to 26 (GHVDHGKT). Thr-26 contacts Mg(2+). Residues 60–64 (GITIN) are G2. Positions 81-84 (DCPG) are G3. GTP-binding positions include 81-85 (DCPGH) and 136-139 (NKCD). The G4 stretch occupies residues 136–139 (NKCD). The interval 176 to 178 (SAL) is G5.

Belongs to the TRAFAC class translation factor GTPase superfamily. Classic translation factor GTPase family. EF-Tu/EF-1A subfamily. As to quaternary structure, monomer.

The protein localises to the cytoplasm. The catalysed reaction is GTP + H2O = GDP + phosphate + H(+). In terms of biological role, GTP hydrolase that promotes the GTP-dependent binding of aminoacyl-tRNA to the A-site of ribosomes during protein biosynthesis. The sequence is that of Elongation factor Tu from Mycoplasmopsis agalactiae (strain NCTC 10123 / CIP 59.7 / PG2) (Mycoplasma agalactiae).